The primary structure comprises 76 residues: Esculentin-2-ALb (76 aa).

The N-terminal stretch at 1–22 is a signal peptide; the sequence is MFTMKKSLLLLFFLGTISLSLC. The propeptide occupies 23-39; that stretch reads EEERSADEDDGEKGVKR. C70 and C76 are joined by a disulfide.

Expressed by the skin glands.

Its subcellular location is the secreted. Its function is as follows. Antimicrobial peptide with activity against Gram-positive and Gram-negative bacteria and against fungi. Has been tested against S.aureus (MIC=1.25 ug/mL), B.pumilus (MIC=2.5 ug/mL), B.cereus (MIC=7.5 ug/mL), E.coli (MIC=12.5 ug/mL), B.dysenteriae (MIC=7.5 ug/mL), A.cacoaceticus (MIC=12.5 ug/mL), P.aeruginosa (MIC=50.0 ug/mL) and C.albicans (MIC=2.5 ug/mL). Also shows a weak hemolytic activity. This chain is Esculentin-2-ALb, found in Amolops loloensis (Lolokou Sucker Frog).